Reading from the N-terminus, the 255-residue chain is Cysteine protease avirulence protein AvrRpt2 (255 aa).

The disordered stretch occupies residues 1 to 50 (MKIAPVAINHSPLSREVPSHAAPTQAKQTNLQSEAGDLDARKSSASSPET). Positions 1–71 (MKIAPVAINH…RHKIEVPAFG (71 aa)) are cleaved as a propeptide — removed in mature form. The tract at residues 70–71 (FG) is determinants of cleavage specificity. The disordered stretch occupies residues 76 to 100 (KKSSKHETGGSSANADSSSVASDST). Over residues 86–98 (SSANADSSSVASD) the composition is skewed to low complexity. Cysteine 122 (nucleophile) is an active-site residue. Active-site residues include histidine 208 and aspartate 226.

It belongs to the peptidase C70 family. As to quaternary structure, interacts physically with plant cell ROC1 (Arabidopsis single-domain cyclophilin) and RIN4. Post-translationally, autocleaved inside plant cells upon activation by cyclophilin. Cleavage is crucial in subcellular location and in eliciting HR. Inhibited by cyclosporin A (cyclophilin inhibitor).

The protein resides in the secreted. The protein localises to the host cell membrane. Its function is as follows. Effector protein involved in gene-for-gene resistance in plants expressing RPS2. Its thiol protease activity is required for the degradation of plant cell RIN4 and consequent activation of RPS2 during bacterial infection. The activation of RPS2 is sufficient for the induction of hypersensitive response (HR) and plant resistance. Cleavage of RIN4 by AvrRpt2 also interferes with RPM1-mediated resistance activated by either AvrRpm1 or AvrB. Contributes to virulence in plants lacking the resistance protein RPS2 promoting pathogen growth and disease symptoms. Inhibits PAMP (pathogen-associated molecular patterns)-induced signaling compromising the host's basal defense system. Blocks plant callose deposition, flg22 (a peptide corresponding to the most conserved domain of flagellin) induced accumulation of PR-1, PR-2 and PR-5 and activation of GST6 transcription. The mechanism of virulence is unknown, but this activity is independent of ethylene and salicylic acid response pathways and independent of RIN4 disappearance. The sequence is that of Cysteine protease avirulence protein AvrRpt2 (avrRpt2) from Pseudomonas syringae pv. tomato.